Here is a 356-residue protein sequence, read N- to C-terminus: tRNA N6-adenosine threonylcarbamoyltransferase (356 aa).

Positions 115 and 119 each coordinate Fe cation. Residues 138 to 142 (LVSGG), Asp-171, Gly-184, and Asn-283 contribute to the substrate site. Asp-311 is a Fe cation binding site.

It belongs to the KAE1 / TsaD family. Fe(2+) is required as a cofactor.

The protein resides in the cytoplasm. It catalyses the reaction L-threonylcarbamoyladenylate + adenosine(37) in tRNA = N(6)-L-threonylcarbamoyladenosine(37) in tRNA + AMP + H(+). Its function is as follows. Required for the formation of a threonylcarbamoyl group on adenosine at position 37 (t(6)A37) in tRNAs that read codons beginning with adenine. Is involved in the transfer of the threonylcarbamoyl moiety of threonylcarbamoyl-AMP (TC-AMP) to the N6 group of A37, together with TsaE and TsaB. TsaD likely plays a direct catalytic role in this reaction. This chain is tRNA N6-adenosine threonylcarbamoyltransferase, found in Prochlorococcus marinus (strain MIT 9313).